Consider the following 416-residue polypeptide: Enterobactin exporter EntS (416 aa).

Over 1 to 21 (MNKQSWLLNLSLLKTHPAFRA) the chain is Cytoplasmic. The helical transmembrane segment at 22–42 (VFLARFISIVSLGLLGVAVPV) threads the bilayer. The Periplasmic segment spans residues 43 to 55 (QIQMMTHSTWQVG). The helical transmembrane segment at 56-76 (LSVTLTGGAMFVGLMVGGVLA) threads the bilayer. The Cytoplasmic portion of the chain corresponds to 77 to 83 (DRYERKK). Residues 84–104 (VILLARGTCGIGFIGLCLNAL) form a helical membrane-spanning segment. Residues 105–109 (LPEPS) are Periplasmic-facing. The helical transmembrane segment at 110-130 (LLAIYLLGLWDGFFASLGVTA) threads the bilayer. The Cytoplasmic portion of the chain corresponds to 131–156 (LLAATPALVGRENLMQAGAITMLTVR). A helical membrane pass occupies residues 157–177 (LGSVISPMIGGLLLATGGVAW). A topological domain (periplasmic) is located at residue Asn178. A helical transmembrane segment spans residues 179–199 (YGLAAAGTFITLLPLLSLPAL). At 200 to 218 (PPPPQPREHPLKSLLAGFR) the chain is on the cytoplasmic side. The helical transmembrane segment at 219 to 239 (FLLASPLVGGIALLGGLLTMA) threads the bilayer. The Periplasmic segment spans residues 240 to 256 (SAVRVLYPALADNWQMS). The chain crosses the membrane as a helical span at residues 257–277 (AAQIGFLYAAIPLGAAIGALT). At 278–287 (SGKLAHSVRP) the chain is on the cytoplasmic side. A helical transmembrane segment spans residues 288-307 (GLLMLLSTLGAFLAISLFGL). Topologically, residues 308–313 (MPMWIL) are periplasmic. The helical transmembrane segment at 314–336 (GVVCLALFGWLSAVSSLLQYTML) threads the bilayer. The Cytoplasmic portion of the chain corresponds to 337 to 356 (QTQTPEAMLGRINGLWTAQN). The helical transmembrane segment at 357–377 (VTGDAIGAALLGGLGAMMTPV) threads the bilayer. Residue Ala378 is a topological domain, periplasmic. The chain crosses the membrane as a helical span at residues 379 to 399 (SASASGFGLLIIGVLLLLVLV). Topologically, residues 400-416 (ELRRFRQTPPQVTASDS) are cytoplasmic.

This sequence belongs to the major facilitator superfamily. EntS (TC 2.A.1.38) family.

It is found in the cell inner membrane. Component of an export pathway for enterobactin. The sequence is that of Enterobactin exporter EntS from Escherichia coli O45:K1 (strain S88 / ExPEC).